The chain runs to 322 residues: Elongation factor P--(R)-beta-lysine ligase (322 aa).

72 to 74 contacts substrate; sequence SPE. Residues 96–98 and asparagine 106 each bind ATP; that span reads RNN. Tyrosine 115 serves as a coordination point for substrate. 241–242 contacts ATP; sequence EL. Residue glutamate 248 participates in substrate binding. Glycine 297 is an ATP binding site.

The protein belongs to the class-II aminoacyl-tRNA synthetase family. EpmA subfamily. In terms of assembly, homodimer.

The catalysed reaction is D-beta-lysine + L-lysyl-[protein] + ATP = N(6)-((3R)-3,6-diaminohexanoyl)-L-lysyl-[protein] + AMP + diphosphate + H(+). With EpmB is involved in the beta-lysylation step of the post-translational modification of translation elongation factor P (EF-P). Catalyzes the ATP-dependent activation of (R)-beta-lysine produced by EpmB, forming a lysyl-adenylate, from which the beta-lysyl moiety is then transferred to the epsilon-amino group of a conserved specific lysine residue in EF-P. The polypeptide is Elongation factor P--(R)-beta-lysine ligase (Buchnera aphidicola subsp. Baizongia pistaciae (strain Bp)).